Consider the following 332-residue polypeptide: Ketol-acid reductoisomerase (NAD(+)) (332 aa).

The KARI N-terminal Rossmann domain occupies 1 to 181 (MKIYYDQDAD…GATRAGVIQT (181 aa)). NAD(+)-binding positions include 24–27 (YGSQ), S50, and 82–85 (DEKQ). H107 is an active-site residue. G133 is an NAD(+) binding site. Residues 182–327 (TFKEETETDL…ARLRGMMPWL (146 aa)) form the KARI C-terminal knotted domain. 4 residues coordinate Mg(2+): D190, E194, E226, and E230. Residue S251 coordinates substrate.

Belongs to the ketol-acid reductoisomerase family. It depends on Mg(2+) as a cofactor.

It catalyses the reaction (2R)-2,3-dihydroxy-3-methylbutanoate + NAD(+) = (2S)-2-acetolactate + NADH + H(+). Its pathway is amino-acid biosynthesis; L-isoleucine biosynthesis; L-isoleucine from 2-oxobutanoate: step 2/4. It functions in the pathway amino-acid biosynthesis; L-valine biosynthesis; L-valine from pyruvate: step 2/4. Involved in the biosynthesis of branched-chain amino acids (BCAA). Catalyzes an alkyl-migration followed by a ketol-acid reduction of (S)-2-acetolactate (S2AL) to yield (R)-2,3-dihydroxy-isovalerate. In the isomerase reaction, S2AL is rearranged via a Mg-dependent methyl migration to produce 3-hydroxy-3-methyl-2-ketobutyrate (HMKB). In the reductase reaction, this 2-ketoacid undergoes a metal-dependent reduction by NADH to yield (R)-2,3-dihydroxy-isovalerate. The chain is Ketol-acid reductoisomerase (NAD(+)) from Thermacetogenium phaeum (strain ATCC BAA-254 / DSM 26808 / PB).